Reading from the N-terminus, the 460-residue chain is Cysteine--tRNA ligase (460 aa).

Position 28 (cysteine 28) interacts with Zn(2+). Residues methionine 30 to histidine 40 carry the 'HIGH' region motif. 3 residues coordinate Zn(2+): cysteine 209, histidine 234, and glutamate 238. The 'KMSKS' region motif lies at lysine 266–serine 270. Residue lysine 269 coordinates ATP.

The protein belongs to the class-I aminoacyl-tRNA synthetase family. As to quaternary structure, monomer. The cofactor is Zn(2+).

The protein resides in the cytoplasm. The catalysed reaction is tRNA(Cys) + L-cysteine + ATP = L-cysteinyl-tRNA(Cys) + AMP + diphosphate. This chain is Cysteine--tRNA ligase, found in Pseudomonas putida (strain ATCC 47054 / DSM 6125 / CFBP 8728 / NCIMB 11950 / KT2440).